A 201-amino-acid polypeptide reads, in one-letter code: Recombination protein RecR (201 aa).

The segment at 57 to 72 (CRDCRTFTEQEVCTIC) adopts a C4-type zinc-finger fold. Positions 81–176 (GQICVVESPA…LASRIAHGVP (96 aa)) constitute a Toprim domain.

The protein belongs to the RecR family.

In terms of biological role, may play a role in DNA repair. It seems to be involved in an RecBC-independent recombinational process of DNA repair. It may act with RecF and RecO. This is Recombination protein RecR from Edwardsiella ictaluri (strain 93-146).